Here is a 235-residue protein sequence, read N- to C-terminus: Coiled-coil domain-containing protein 71L (235 aa).

Positions 1–13 (MRRSMKRRRRRRP) are enriched in basic residues. The tract at residues 1–30 (MRRSMKRRRRRRPVAPATAARGGDFRAEDG) is disordered. Phosphoserine occurs at positions 52 and 89. The disordered stretch occupies residues 109 to 167 (PDPPGPPTARGQARRPVPRAAARRRRRGARAAAARRRKPRPPPPPPPPPEESCPAKPVA). Residues 120–148 (QARRPVPRAAARRRRRGARAAAARRRKPR) show a composition bias toward basic residues. Residues 149–159 (PPPPPPPPPEE) are compositionally biased toward pro residues. Thr185 is modified (phosphothreonine). Ser198 bears the Phosphoserine mark.

The polypeptide is Coiled-coil domain-containing protein 71L (CCDC71L) (Homo sapiens (Human)).